Reading from the N-terminus, the 80-residue chain is Acyl carrier protein (80 aa).

The region spanning 2 to 77 is the Carrier domain; sequence SEINQKVVDI…QVVEYLEKRL (76 aa). Ser-37 is modified (O-(pantetheine 4'-phosphoryl)serine).

Belongs to the acyl carrier protein (ACP) family. In terms of processing, 4'-phosphopantetheine is transferred from CoA to a specific serine of apo-ACP by AcpS. This modification is essential for activity because fatty acids are bound in thioester linkage to the sulfhydryl of the prosthetic group.

It localises to the cytoplasm. It participates in lipid metabolism; fatty acid biosynthesis. Functionally, carrier of the growing fatty acid chain in fatty acid biosynthesis. In Amoebophilus asiaticus (strain 5a2), this protein is Acyl carrier protein.